A 355-amino-acid polypeptide reads, in one-letter code: Phosphoribosylformylglycinamidine cyclo-ligase (355 aa).

The protein belongs to the AIR synthase family.

The protein resides in the cytoplasm. The enzyme catalyses 2-formamido-N(1)-(5-O-phospho-beta-D-ribosyl)acetamidine + ATP = 5-amino-1-(5-phospho-beta-D-ribosyl)imidazole + ADP + phosphate + H(+). The protein operates within purine metabolism; IMP biosynthesis via de novo pathway; 5-amino-1-(5-phospho-D-ribosyl)imidazole from N(2)-formyl-N(1)-(5-phospho-D-ribosyl)glycinamide: step 2/2. This is Phosphoribosylformylglycinamidine cyclo-ligase from Methylobacterium nodulans (strain LMG 21967 / CNCM I-2342 / ORS 2060).